The chain runs to 403 residues: Accessory Sec system protein translocase subunit SecY2 (403 aa).

The next 10 membrane-spanning stretches (helical) occupy residues 17–37 (MLYT…SIVS), 63–83 (LNIF…LMLI), 105–125 (ILTL…YVSK), 131–151 (DNIY…VWLA), 157–177 (YGIA…MMHQ), 186–206 (HIVI…LLFI), 240–260 (ITLM…HFIL), 276–296 (FDSP…GYFL), 339–359 (WFGL…TLFV), and 366–386 (IYFS…AETI).

This sequence belongs to the SecY/SEC61-alpha family. SecY2 subfamily. In terms of assembly, may form heterotrimers with SecE and SecG subunits (Potential). Component of the accessory SecA2/SecY2 protein translocase complex required to export cell wall protein SrpA.

It localises to the cell membrane. Its function is as follows. The central subunit of a protein translocation channel (Potential). Part of the accessory SecA2/SecY2 system specifically required to export SraP, a serine-rich repeat cell wall protein encoded upstream in the same operon. The sequence is that of Accessory Sec system protein translocase subunit SecY2 from Staphylococcus aureus (strain NCTC 8325 / PS 47).